Reading from the N-terminus, the 39-residue chain is Neuropeptide F (39 aa).

Phenylalanine 39 is modified (phenylalanine amide).

The protein belongs to the NPY family. As to expression, neuronal somata and fibers.

It is found in the secreted. May have an important physiological role in neuroregulation. This Cornu aspersum (Brown garden snail) protein is Neuropeptide F.